The primary structure comprises 105 residues: Mitomycin resistance protein McrB (105 aa).

Functionally, involved in mitomycin resistance. May operate with McrA or may be a type of transcriptional activator protein. This Streptomyces lavendulae protein is Mitomycin resistance protein McrB (mcrB).